We begin with the raw amino-acid sequence, 159 residues long: Transcription elongation factor GreA (159 aa).

A coiled-coil region spans residues 7–72; that stretch reads MTVRGAEKLR…IQEIESKLSN (66 aa).

This sequence belongs to the GreA/GreB family.

Necessary for efficient RNA polymerase transcription elongation past template-encoded arresting sites. The arresting sites in DNA have the property of trapping a certain fraction of elongating RNA polymerases that pass through, resulting in locked ternary complexes. Cleavage of the nascent transcript by cleavage factors such as GreA or GreB allows the resumption of elongation from the new 3'terminus. GreA releases sequences of 2 to 3 nucleotides. This chain is Transcription elongation factor GreA, found in Buchnera aphidicola subsp. Schizaphis graminum (strain Sg).